The sequence spans 710 residues: Polyribonucleotide nucleotidyltransferase (710 aa).

Residues Asp501 and Asp507 each contribute to the Mg(2+) site. Residues 568–628 form the KH domain; it reads PKVQMFQIKP…ETVKQAILFI (61 aa). An S1 motif domain is found at 638–710; sequence NSIYHAHISR…RIDFVLISKK (73 aa).

The protein belongs to the polyribonucleotide nucleotidyltransferase family. It depends on Mg(2+) as a cofactor.

The protein localises to the cytoplasm. The enzyme catalyses RNA(n+1) + phosphate = RNA(n) + a ribonucleoside 5'-diphosphate. Involved in mRNA degradation. Catalyzes the phosphorolysis of single-stranded polyribonucleotides processively in the 3'- to 5'-direction. The polypeptide is Polyribonucleotide nucleotidyltransferase (Phytoplasma australiense).